Consider the following 309-residue polypeptide: Tagatose-6-phosphate kinase (309 aa).

Belongs to the carbohydrate kinase PfkB family. LacC subfamily.

The catalysed reaction is D-tagatofuranose 6-phosphate + ATP = D-tagatofuranose 1,6-bisphosphate + ADP + H(+). Its pathway is carbohydrate metabolism; D-tagatose 6-phosphate degradation; D-glyceraldehyde 3-phosphate and glycerone phosphate from D-tagatose 6-phosphate: step 1/2. The sequence is that of Tagatose-6-phosphate kinase from Streptococcus pyogenes serotype M4 (strain MGAS10750).